The sequence spans 264 residues: O-methyltransferase resE (264 aa).

2 residues coordinate S-adenosyl-L-methionine: glutamine 97 and histidine 142.

It belongs to the methyltransferase superfamily.

The catalysed reaction is desmethylrestrictinol + S-adenosyl-L-methionine = restrictinol + S-adenosyl-L-homocysteine + H(+). The protein operates within antifungal biosynthesis. Its function is as follows. O-methyltransferase; part of the gene cluster that mediates the biosynthesis of the tetrahydropyranyl antifungal agent restricticin that acts as an inhibitor of CYP51 and blocks the ergosterol biosynthesis. Within the pathway, resE uses S-adenosylmethionine to methylate position C4 of desmethylrestrictinol to produce restrictinol. The highly reducing polyketide synthase resH, the short chain dehydrogenase resG, the cyclase resF, the FAD-dependent monooxygenase resA and the enoylreductase resD are required to generate the first stable intermediate desmethylrestrictinol. ResH with resD biosynthesize the first polyketide chain intermediate that is reduced by resG, followed by epoxidation by resA before 6-endo cyclization via epoxide opening by resF leads to desmethylrestrictinol. The methyltransferase resE then catalyzes the C4 O-methylation of desmethylrestrictinol to produce restrictinol, and the nonribosomal peptide synthetase resC catalyzes the C3 esterification of restrictinol with glycine that leads to restricticin. This chain is O-methyltransferase resE, found in Aspergillus sclerotiorum.